A 408-amino-acid polypeptide reads, in one-letter code: Dihydrolipoyllysine-residue acetyltransferase component of pyruvate dehydrogenase complex (408 aa).

Residues 2–78 form the Lipoyl-binding domain; sequence PIKILMPALS…PVNSLIAVLS (77 aa). Lysine 43 bears the N6-lipoyllysine mark. The Peripheral subunit-binding (PSBD) domain occupies 128–165; it reads FASPLAKRLAKIGDIRLENVQGSGPHGRIVKQDILSYD. Residue histidine 381 is part of the active site.

This sequence belongs to the 2-oxoacid dehydrogenase family. In terms of assembly, forms a 24-polypeptide structural core with octahedral symmetry. It depends on (R)-lipoate as a cofactor.

The catalysed reaction is N(6)-[(R)-dihydrolipoyl]-L-lysyl-[protein] + acetyl-CoA = N(6)-[(R)-S(8)-acetyldihydrolipoyl]-L-lysyl-[protein] + CoA. In terms of biological role, the pyruvate dehydrogenase complex catalyzes the overall conversion of pyruvate to acetyl-CoA and CO(2). It contains multiple copies of three enzymatic components: pyruvate dehydrogenase (E1), dihydrolipoamide acetyltransferase (E2) and lipoamide dehydrogenase (E3). In Rickettsia prowazekii (strain Madrid E), this protein is Dihydrolipoyllysine-residue acetyltransferase component of pyruvate dehydrogenase complex (pdhC).